The primary structure comprises 119 residues: Integration host factor subunit alpha (119 aa).

Residues 96 to 119 (INGQQANGKMNGESAPSEFSAETE) are disordered.

The protein belongs to the bacterial histone-like protein family. In terms of assembly, heterodimer of an alpha and a beta chain.

Its function is as follows. This protein is one of the two subunits of integration host factor, a specific DNA-binding protein that functions in genetic recombination as well as in transcriptional and translational control. In Bradyrhizobium sp. (strain ORS 278), this protein is Integration host factor subunit alpha.